Consider the following 101-residue polypeptide: NADH-quinone oxidoreductase subunit K 1 (101 aa).

3 helical membrane-spanning segments follow: residues 4–24, 31–51, and 64–84; these read IGTM…TVGV, VVIL…LVAF, and IFVM…VIAF.

This sequence belongs to the complex I subunit 4L family. NDH-1 is composed of 14 different subunits. Subunits NuoA, H, J, K, L, M, N constitute the membrane sector of the complex.

The protein localises to the cell inner membrane. The enzyme catalyses a quinone + NADH + 5 H(+)(in) = a quinol + NAD(+) + 4 H(+)(out). In terms of biological role, NDH-1 shuttles electrons from NADH, via FMN and iron-sulfur (Fe-S) centers, to quinones in the respiratory chain. The immediate electron acceptor for the enzyme in this species is believed to be ubiquinone. Couples the redox reaction to proton translocation (for every two electrons transferred, four hydrogen ions are translocated across the cytoplasmic membrane), and thus conserves the redox energy in a proton gradient. The sequence is that of NADH-quinone oxidoreductase subunit K 1 from Koribacter versatilis (strain Ellin345).